The chain runs to 100 residues: Large ribosomal subunit protein uL23 (100 aa).

This sequence belongs to the universal ribosomal protein uL23 family. Part of the 50S ribosomal subunit. Contacts protein L29, and trigger factor when it is bound to the ribosome.

Functionally, one of the early assembly proteins it binds 23S rRNA. One of the proteins that surrounds the polypeptide exit tunnel on the outside of the ribosome. Forms the main docking site for trigger factor binding to the ribosome. This chain is Large ribosomal subunit protein uL23, found in Aeromonas hydrophila subsp. hydrophila (strain ATCC 7966 / DSM 30187 / BCRC 13018 / CCUG 14551 / JCM 1027 / KCTC 2358 / NCIMB 9240 / NCTC 8049).